Here is a 432-residue protein sequence, read N- to C-terminus: 5'-deoxyadenosine deaminase (432 aa).

Zn(2+) is bound by residues histidine 63 and histidine 65. Substrate-binding residues include glutamate 92 and histidine 184. Histidine 211 contacts Zn(2+). Substrate contacts are provided by glutamate 214 and aspartate 299. Residue aspartate 299 participates in Zn(2+) binding.

Belongs to the metallo-dependent hydrolases superfamily. MTA/SAH deaminase family. Homotetramer. Requires Zn(2+) as cofactor.

The enzyme catalyses 5'-deoxyadenosine + H2O + H(+) = 5'-deoxyinosine + NH4(+). The catalysed reaction is S-adenosyl-L-homocysteine + H2O + H(+) = S-inosyl-L-homocysteine + NH4(+). It catalyses the reaction S-methyl-5'-thioadenosine + H2O + H(+) = S-methyl-5'-thioinosine + NH4(+). It carries out the reaction adenosine + H2O + H(+) = inosine + NH4(+). The protein operates within amino-acid biosynthesis; S-adenosyl-L-methionine biosynthesis. Catalyzes the deamination of three SAM-derived enzymatic products, namely 5'-deoxyadenosine, S-adenosyl-L-homocysteine, and 5'-methylthioadenosine, to produce the inosine analogs. Can also deaminate adenosine. The preferred substrate for this enzyme is 5'-deoxyadenosine, but all these substrates are efficiently deaminated. Likely functions in a S-adenosyl-L-methionine (SAM) recycling pathway from S-adenosyl-L-homocysteine (SAH) produced from SAM-dependent methylation reactions. May also be involved in the recycling of 5'-deoxyadenosine, whereupon the 5'-deoxyribose moiety of 5'-deoxyinosine is further metabolized to deoxyhexoses used for the biosynthesis of aromatic amino acids in methanogens. The polypeptide is 5'-deoxyadenosine deaminase (Methanosarcina mazei (strain ATCC BAA-159 / DSM 3647 / Goe1 / Go1 / JCM 11833 / OCM 88) (Methanosarcina frisia)).